Consider the following 307-residue polypeptide: Acetyl-coenzyme A carboxylase carboxyl transferase subunit beta (307 aa).

The CoA carboxyltransferase N-terminal domain maps to 28 to 297; the sequence is LWVKCPDTGQ…TPQPGTAPEP (270 aa). Positions 286 to 307 are disordered; the sequence is RRTPQPGTAPEPTTPEPLPNAA. Pro residues predominate over residues 292-307; sequence GTAPEPTTPEPLPNAA.

Belongs to the AccD/PCCB family. In terms of assembly, acetyl-CoA carboxylase is a heterohexamer composed of biotin carboxyl carrier protein (AccB), biotin carboxylase (AccC) and two subunits each of ACCase subunit alpha (AccA) and ACCase subunit beta (AccD).

The protein resides in the cytoplasm. The catalysed reaction is N(6)-carboxybiotinyl-L-lysyl-[protein] + acetyl-CoA = N(6)-biotinyl-L-lysyl-[protein] + malonyl-CoA. The protein operates within lipid metabolism; malonyl-CoA biosynthesis; malonyl-CoA from acetyl-CoA: step 1/1. Its function is as follows. Component of the acetyl coenzyme A carboxylase (ACC) complex. Biotin carboxylase (BC) catalyzes the carboxylation of biotin on its carrier protein (BCCP) and then the CO(2) group is transferred by the transcarboxylase to acetyl-CoA to form malonyl-CoA. This Methylorubrum extorquens (strain CM4 / NCIMB 13688) (Methylobacterium extorquens) protein is Acetyl-coenzyme A carboxylase carboxyl transferase subunit beta.